The sequence spans 349 residues: UPF0284 protein MM_0708 (349 aa).

This sequence belongs to the UPF0284 family.

The protein is UPF0284 protein MM_0708 of Methanosarcina mazei (strain ATCC BAA-159 / DSM 3647 / Goe1 / Go1 / JCM 11833 / OCM 88) (Methanosarcina frisia).